The sequence spans 336 residues: 3-isopropylmalate dehydrogenase (336 aa).

4 residues coordinate substrate: Arg-87, Arg-97, Arg-121, and Asp-211. Mg(2+) is bound by residues Asp-211, Asp-235, and Asp-239. 271 to 283 (GSAPDIAGQGIAD) contributes to the NAD(+) binding site.

The protein belongs to the isocitrate and isopropylmalate dehydrogenases family. LeuB type 2 subfamily. In terms of assembly, homodimer. The cofactor is Mg(2+). Requires Mn(2+) as cofactor.

It is found in the cytoplasm. It catalyses the reaction (2R,3S)-3-isopropylmalate + NAD(+) = 4-methyl-2-oxopentanoate + CO2 + NADH. Its pathway is amino-acid biosynthesis; L-leucine biosynthesis; L-leucine from 3-methyl-2-oxobutanoate: step 3/4. Catalyzes the oxidation of 3-carboxy-2-hydroxy-4-methylpentanoate (3-isopropylmalate) to 3-carboxy-4-methyl-2-oxopentanoate. The product decarboxylates to 4-methyl-2 oxopentanoate. This Mycolicibacterium vanbaalenii (strain DSM 7251 / JCM 13017 / BCRC 16820 / KCTC 9966 / NRRL B-24157 / PYR-1) (Mycobacterium vanbaalenii) protein is 3-isopropylmalate dehydrogenase.